The chain runs to 181 residues: ATP-dependent protease subunit HslV (181 aa).

Thr-2 is an active-site residue. Residues Gly-157, Cys-160, and Thr-163 each coordinate Na(+).

The protein belongs to the peptidase T1B family. HslV subfamily. A double ring-shaped homohexamer of HslV is capped on each side by a ring-shaped HslU homohexamer. The assembly of the HslU/HslV complex is dependent on binding of ATP.

It localises to the cytoplasm. The catalysed reaction is ATP-dependent cleavage of peptide bonds with broad specificity.. With respect to regulation, allosterically activated by HslU binding. Functionally, protease subunit of a proteasome-like degradation complex believed to be a general protein degrading machinery. This Hahella chejuensis (strain KCTC 2396) protein is ATP-dependent protease subunit HslV.